The following is a 333-amino-acid chain: Leukocyte cell-derived chemotaxin 1 (333 aa).

The helical transmembrane segment at 42 to 62 (VGAVVLISGAVLLLFGAIGAF) threads the bilayer. One can recognise a BRICHOS domain in the interval 104 to 201 (GSGAEEAIEV…LCGDLPIFWL (98 aa)). Cysteine 131 and cysteine 193 are joined by a disulfide. Residues 211–214 (RERR) constitute a propeptide that is removed on maturation. Positions 212 to 269 (ERREVVRKTVPTTTKRPHSGPRGNPGPARMRNDSRPSVQEDSEPFNPDNPYHQEGESM) are disordered. N-linked (GlcNAc...) asparagine glycosylation is present at asparagine 243. 4 disulfide bridges follow: cysteine 281/cysteine 285, cysteine 282/cysteine 322, cysteine 292/cysteine 316, and cysteine 296/cysteine 312.

This sequence belongs to the chondromodulin-1 family. Post-translationally, after cleavage, the post-translationally modified ChM-I is secreted as a glycoprotein.

It is found in the secreted. The protein resides in the extracellular space. The protein localises to the extracellular matrix. It localises to the endomembrane system. Bifunctional growth regulator that stimulates the growth of cultured chondrocytes in the presence of basic fibroblast growth factor (FGF) but inhibits the growth of cultured vascular endothelial cells. May contribute to the rapid growth of cartilage and vascular invasion prior to the replacement of cartilage by bone during endochondral bone development. Inhibits in vitro tube formation and mobilization of endothelial cells. Plays a role as antiangiogenic factor in cardiac valves to suppress neovascularization. The protein is Leukocyte cell-derived chemotaxin 1 of Oryctolagus cuniculus (Rabbit).